The chain runs to 311 residues: Protein lifeguard 3 (311 aa).

Disordered stretches follow at residues 1 to 37 (MSNP…GGYP) and 50 to 72 (PAGY…PGHG). The segment covering 53–62 (YPQPMPPTHP) has biased composition (pro residues). A phosphoserine mark is found at serine 81 and serine 83. A run of 7 helical transmembrane segments spans residues 110-130 (LLIT…SAFV), 134-154 (VAVY…LACC), 165-185 (IILL…ISSM), 190-210 (AVII…IFCF), 221-241 (GLFC…SIVL), 246-266 (VYWL…LFLA), and 286-306 (ITGA…VLQL).

This sequence belongs to the BI1 family. LFG subfamily.

Its subcellular location is the membrane. The protein localises to the lysosome membrane. The protein resides in the endosome membrane. Its function is as follows. Negatively regulates aortic matrix metalloproteinase-9 (MMP9) production and may play a protective role in vascular remodeling. The polypeptide is Protein lifeguard 3 (TMBIM1) (Homo sapiens (Human)).